We begin with the raw amino-acid sequence, 102 residues long: Large ribosomal subunit protein bL21 (102 aa).

This sequence belongs to the bacterial ribosomal protein bL21 family. As to quaternary structure, part of the 50S ribosomal subunit. Contacts protein L20.

This protein binds to 23S rRNA in the presence of protein L20. This is Large ribosomal subunit protein bL21 from Staphylococcus aureus.